The chain runs to 413 residues: MAP kinase-interacting serine/threonine-protein kinase 1 (413 aa).

The segment at Met-1–Asp-26 is disordered. Thr-22 carries the post-translational modification Phosphothreonine; by PAK2. At Ser-27 the chain carries Phosphoserine; by PAK2. Residues Gln-37–Val-321 form the Protein kinase domain. ATP contacts are provided by residues Leu-43–Val-51 and Lys-66. Residue Asp-158 is the Proton acceptor of the active site. Residues Ser-168 and Ser-173 each carry the phosphoserine modification. A phosphothreonine mark is found at Thr-197, Thr-202, and Thr-332.

It belongs to the protein kinase superfamily. CAMK Ser/Thr protein kinase family. Interacts with the C-terminal regions of EIF4G1 and EIF4G2. Also binds to dephosphorylated ERK1 and ERK2, and to the p38 kinases. Mg(2+) serves as cofactor. Dual phosphorylation of Thr-197 and Thr-202 activates the kinase. Phosphorylation of Thr-332 activates the kinase. MAPK3/ERK1 is one of the kinases which activate MKNK1/MNK1. Phosphorylation by PAK2 leads to a reduced phosphorylation of EIF4G1.

The catalysed reaction is L-seryl-[protein] + ATP = O-phospho-L-seryl-[protein] + ADP + H(+). The enzyme catalyses L-threonyl-[protein] + ATP = O-phospho-L-threonyl-[protein] + ADP + H(+). Phosphorylated and activated by the p38 kinases and kinases in the Erk pathway. In terms of biological role, may play a role in the response to environmental stress and cytokines. Appears to regulate translation by phosphorylating EIF4E, thus increasing the affinity of this protein for the 7-methylguanosine-containing mRNA cap. The protein is MAP kinase-interacting serine/threonine-protein kinase 1 (Mknk1) of Rattus norvegicus (Rat).